A 205-amino-acid chain; its full sequence is Thiamine-phosphate synthase (205 aa).

4-amino-2-methyl-5-(diphosphooxymethyl)pyrimidine is bound by residues 37 to 41 (QVREK) and asparagine 69. Mg(2+) contacts are provided by aspartate 70 and aspartate 89. Serine 108 is a binding site for 4-amino-2-methyl-5-(diphosphooxymethyl)pyrimidine. 2-[(2R,5Z)-2-carboxy-4-methylthiazol-5(2H)-ylidene]ethyl phosphate is bound at residue 134–136 (TGS). Lysine 137 lines the 4-amino-2-methyl-5-(diphosphooxymethyl)pyrimidine pocket. Residues glycine 165 and 185–186 (IS) contribute to the 2-[(2R,5Z)-2-carboxy-4-methylthiazol-5(2H)-ylidene]ethyl phosphate site.

This sequence belongs to the thiamine-phosphate synthase family. It depends on Mg(2+) as a cofactor.

The catalysed reaction is 2-[(2R,5Z)-2-carboxy-4-methylthiazol-5(2H)-ylidene]ethyl phosphate + 4-amino-2-methyl-5-(diphosphooxymethyl)pyrimidine + 2 H(+) = thiamine phosphate + CO2 + diphosphate. It carries out the reaction 2-(2-carboxy-4-methylthiazol-5-yl)ethyl phosphate + 4-amino-2-methyl-5-(diphosphooxymethyl)pyrimidine + 2 H(+) = thiamine phosphate + CO2 + diphosphate. The enzyme catalyses 4-methyl-5-(2-phosphooxyethyl)-thiazole + 4-amino-2-methyl-5-(diphosphooxymethyl)pyrimidine + H(+) = thiamine phosphate + diphosphate. It functions in the pathway cofactor biosynthesis; thiamine diphosphate biosynthesis; thiamine phosphate from 4-amino-2-methyl-5-diphosphomethylpyrimidine and 4-methyl-5-(2-phosphoethyl)-thiazole: step 1/1. In terms of biological role, condenses 4-methyl-5-(beta-hydroxyethyl)thiazole monophosphate (THZ-P) and 2-methyl-4-amino-5-hydroxymethyl pyrimidine pyrophosphate (HMP-PP) to form thiamine monophosphate (TMP). The chain is Thiamine-phosphate synthase from Clostridium botulinum (strain Loch Maree / Type A3).